A 511-amino-acid chain; its full sequence is Bifunctional purine biosynthesis protein PurH (511 aa).

One can recognise an MGS-like domain in the interval 1 to 145; sequence MKRRALVSVS…KNHQHVTVVV (145 aa).

The protein belongs to the PurH family.

It catalyses the reaction (6R)-10-formyltetrahydrofolate + 5-amino-1-(5-phospho-beta-D-ribosyl)imidazole-4-carboxamide = 5-formamido-1-(5-phospho-D-ribosyl)imidazole-4-carboxamide + (6S)-5,6,7,8-tetrahydrofolate. The catalysed reaction is IMP + H2O = 5-formamido-1-(5-phospho-D-ribosyl)imidazole-4-carboxamide. It participates in purine metabolism; IMP biosynthesis via de novo pathway; 5-formamido-1-(5-phospho-D-ribosyl)imidazole-4-carboxamide from 5-amino-1-(5-phospho-D-ribosyl)imidazole-4-carboxamide (10-formyl THF route): step 1/1. It functions in the pathway purine metabolism; IMP biosynthesis via de novo pathway; IMP from 5-formamido-1-(5-phospho-D-ribosyl)imidazole-4-carboxamide: step 1/1. This is Bifunctional purine biosynthesis protein PurH from Halalkalibacterium halodurans (strain ATCC BAA-125 / DSM 18197 / FERM 7344 / JCM 9153 / C-125) (Bacillus halodurans).